A 623-amino-acid chain; its full sequence is Glutathione import ATP-binding protein GsiA (623 aa).

ABC transporter domains are found at residues 15–269 and 325–564; these read VSGL…QTLL and LRSG…RKLM. Residues 49 to 56 and 357 to 364 each bind ATP; these read GESGSGKS.

This sequence belongs to the ABC transporter superfamily. Glutathione importer (TC 3.A.1.5.11) family. As to quaternary structure, the complex is composed of two ATP-binding proteins (GsiA), two transmembrane proteins (GsiC and GsiD) and a solute-binding protein (GsiB).

It is found in the cell inner membrane. The catalysed reaction is glutathione(out) + ATP + H2O = glutathione(in) + ADP + phosphate + H(+). Functionally, part of the ABC transporter complex GsiABCD involved in glutathione import. Responsible for energy coupling to the transport system. The sequence is that of Glutathione import ATP-binding protein GsiA from Salmonella typhimurium (strain LT2 / SGSC1412 / ATCC 700720).